The chain runs to 185 residues: Lipid A acyltransferase PagP (185 aa).

The first 14 residues, 1 to 14 (MKLKPVLYLLMLLG), serve as a signal peptide directing secretion. Cys15 is lipidated: N-palmitoyl cysteine. The S-diacylglycerol cysteine moiety is linked to residue Cys15. Residues His57, Asp100, and Ser101 contribute to the active site.

Belongs to the lipid A palmitoyltransferase family. Homodimer.

The protein localises to the cell outer membrane. It carries out the reaction a lipid A + a 1,2-diacyl-sn-glycero-3-phosphocholine = a hepta-acyl lipid A + a 2-acyl-sn-glycero-3-phosphocholine. The enzyme catalyses a lipid IVA + a 1,2-diacyl-sn-glycero-3-phosphocholine = a lipid IVB + a 2-acyl-sn-glycero-3-phosphocholine. It catalyses the reaction a lipid IIA + a 1,2-diacyl-sn-glycero-3-phosphocholine = a lipid IIB + a 2-acyl-sn-glycero-3-phosphocholine. Transfers a fatty acid residue from the sn-1 position of a phospholipid to the N-linked hydroxyfatty acid chain on the proximal unit of lipid A or its precursors. The chain is Lipid A acyltransferase PagP from Erwinia pyrifoliae (strain DSM 12163 / CIP 106111 / Ep16/96).